A 292-amino-acid polypeptide reads, in one-letter code: Lipoyl synthase (292 aa).

Cys-38, Cys-43, Cys-49, Cys-64, Cys-68, Cys-71, and Ser-277 together coordinate [4Fe-4S] cluster. The region spanning 50–266 is the Radical SAM core domain; sequence WSKGTATFML…KNRAESLGFR (217 aa).

It belongs to the radical SAM superfamily. Lipoyl synthase family. Requires [4Fe-4S] cluster as cofactor.

The protein resides in the cytoplasm. It carries out the reaction [[Fe-S] cluster scaffold protein carrying a second [4Fe-4S](2+) cluster] + N(6)-octanoyl-L-lysyl-[protein] + 2 oxidized [2Fe-2S]-[ferredoxin] + 2 S-adenosyl-L-methionine + 4 H(+) = [[Fe-S] cluster scaffold protein] + N(6)-[(R)-dihydrolipoyl]-L-lysyl-[protein] + 4 Fe(3+) + 2 hydrogen sulfide + 2 5'-deoxyadenosine + 2 L-methionine + 2 reduced [2Fe-2S]-[ferredoxin]. It functions in the pathway protein modification; protein lipoylation via endogenous pathway; protein N(6)-(lipoyl)lysine from octanoyl-[acyl-carrier-protein]: step 2/2. Catalyzes the radical-mediated insertion of two sulfur atoms into the C-6 and C-8 positions of the octanoyl moiety bound to the lipoyl domains of lipoate-dependent enzymes, thereby converting the octanoylated domains into lipoylated derivatives. This Chlorobium limicola (strain DSM 245 / NBRC 103803 / 6330) protein is Lipoyl synthase.